The sequence spans 591 residues: Maintenance of mitochondrial morphology protein 1 (591 aa).

Residues 1–83 lie on the Lumenal side of the membrane; sequence MGFNIPWNGT…AQPSLSFTQG (83 aa). A helical transmembrane segment spans residues 84–104; sequence LLVGQLSVVLLIGAFIKFFIF. Residues 105-591 are Cytoplasmic-facing; it reads GEAPPPPSRS…GSMPDSVAVT (487 aa). 4 disordered regions span residues 138–159, 170–189, 334–398, and 479–591; these read PRTLREKPSTSNILRPVPSSST, YSATPTNPTSKHGRSRVHHS, PGTS…KHAH, and EAEA…VAVT. Polar residues-rich tracts occupy residues 146-159 and 170-179; these read STSNILRPVPSSST and YSATPTNPTS. Basic residues predominate over residues 180 to 189; the sequence is KHGRSRVHHS. The 271-residue stretch at 192–462 folds into the SMP-LTD domain; it reads QPESLDWFNV…EPRVQVVGLP (271 aa). Positions 336 to 371 are enriched in polar residues; sequence TSDQTMGPSASPPNQSTSTETASINDQTSEGQSTQR. Low complexity predominate over residues 379 to 389; it reads PTNSTPTAATA. 2 stretches are compositionally biased toward gly residues: residues 496-525 and 536-550; these read TAGGDGMRGRGGGGGGGGLRGNSSGRGMGY and GDGGTGVVQGQGAGG. Residues 563-578 are compositionally biased toward basic and acidic residues; the sequence is GGDDGEGPGRRSDERF.

Belongs to the MMM1 family. In terms of assembly, homodimer. Component of the ER-mitochondria encounter structure (ERMES) or MDM complex, composed of MMM1, MDM10, MDM12 and MDM34. An MMM1 homodimer associates with one molecule of MDM12 on each side in a pairwise head-to-tail manner, and the SMP-LTD domains of MMM1 and MDM12 generate a continuous hydrophobic tunnel for phospholipid trafficking.

Its subcellular location is the endoplasmic reticulum membrane. In terms of biological role, component of the ERMES/MDM complex, which serves as a molecular tether to connect the endoplasmic reticulum (ER) and mitochondria. Components of this complex are involved in the control of mitochondrial shape and protein biogenesis, and function in nonvesicular lipid trafficking between the ER and mitochondria. The MDM12-MMM1 subcomplex functions in the major beta-barrel assembly pathway that is responsible for biogenesis of all outer membrane beta-barrel proteins, and acts in a late step after the SAM complex. The MDM10-MDM12-MMM1 subcomplex further acts in the TOM40-specific pathway after the action of the MDM12-MMM1 complex. Essential for establishing and maintaining the structure of mitochondria and maintenance of mtDNA nucleoids. This Ajellomyces capsulatus (strain G186AR / H82 / ATCC MYA-2454 / RMSCC 2432) (Darling's disease fungus) protein is Maintenance of mitochondrial morphology protein 1.